The sequence spans 315 residues: Transaldolase (315 aa).

K125 serves as the catalytic Schiff-base intermediate with substrate.

It belongs to the transaldolase family. Type 1 subfamily. In terms of assembly, homodimer.

The protein localises to the cytoplasm. It catalyses the reaction D-sedoheptulose 7-phosphate + D-glyceraldehyde 3-phosphate = D-erythrose 4-phosphate + beta-D-fructose 6-phosphate. Its pathway is carbohydrate degradation; pentose phosphate pathway; D-glyceraldehyde 3-phosphate and beta-D-fructose 6-phosphate from D-ribose 5-phosphate and D-xylulose 5-phosphate (non-oxidative stage): step 2/3. In terms of biological role, transaldolase is important for the balance of metabolites in the pentose-phosphate pathway. The polypeptide is Transaldolase (Polaromonas sp. (strain JS666 / ATCC BAA-500)).